The sequence spans 193 residues: Peptidyl-tRNA hydrolase (193 aa).

His-17 is a binding site for tRNA. Catalysis depends on His-22, which acts as the Proton acceptor. TRNA contacts are provided by Phe-68, Asn-70, and Asn-116.

The protein belongs to the PTH family. In terms of assembly, monomer.

The protein localises to the cytoplasm. The enzyme catalyses an N-acyl-L-alpha-aminoacyl-tRNA + H2O = an N-acyl-L-amino acid + a tRNA + H(+). In terms of biological role, hydrolyzes ribosome-free peptidyl-tRNAs (with 1 or more amino acids incorporated), which drop off the ribosome during protein synthesis, or as a result of ribosome stalling. Its function is as follows. Catalyzes the release of premature peptidyl moieties from peptidyl-tRNA molecules trapped in stalled 50S ribosomal subunits, and thus maintains levels of free tRNAs and 50S ribosomes. This Xanthomonas campestris pv. campestris (strain 8004) protein is Peptidyl-tRNA hydrolase.